Consider the following 255-residue polypeptide: 5'-nucleotidase SurE (255 aa).

A divalent metal cation is bound by residues D8, D9, S40, and N95.

The protein belongs to the SurE nucleotidase family. Requires a divalent metal cation as cofactor.

The protein resides in the cytoplasm. The enzyme catalyses a ribonucleoside 5'-phosphate + H2O = a ribonucleoside + phosphate. Nucleotidase that shows phosphatase activity on nucleoside 5'-monophosphates. This chain is 5'-nucleotidase SurE, found in Solidesulfovibrio magneticus (strain ATCC 700980 / DSM 13731 / RS-1) (Desulfovibrio magneticus).